The chain runs to 190 residues: Syndecan-2-B (190 aa).

The N-terminal stretch at 1-22 is a signal peptide; it reads MRNVWLIVPFALLAAFSGETWA. Topologically, residues 23-136 are extracellular; the sequence is QADRDLYIDS…NLFHRTEVLA (114 aa). The interval 34-60 is disordered; the sequence is ESSGNYPVDDDDYSSGSGSGIPAHDDD. 4 O-linked (Xyl...) (glycosaminoglycan) serine glycosylation sites follow: Ser36, Ser48, Ser50, and Ser52. The helical transmembrane segment at 137 to 157 threads the bilayer; sequence AVIAGGGIGFLFAVFLILLLV. The Cytoplasmic segment spans residues 158-190; the sequence is YRMRKKDEGSYDLGERKPSSAVYQKAPTKEFYA. Positions 167-190 are disordered; it reads SYDLGERKPSSAVYQKAPTKEFYA.

This sequence belongs to the syndecan proteoglycan family. In terms of processing, O-glycosylated; contains both heparan sulfate and chondroitin sulfate.

The protein localises to the membrane. Cell surface proteoglycan. This Xenopus laevis (African clawed frog) protein is Syndecan-2-B (sdc2-b).